The following is a 525-amino-acid chain: MSFDLVAGNARSNFVFKNWAGIYSCRPQLYFQPNSIDEVVQIVKAAIEQGKTIVTVGSGHSPSDMCVTDQWLMNLDNLNSVVEFKENKEELYADVTVEAGLRIYQLSEILAEKGYAIQNLGSISEQSVAGIISTGTHGSSPYHGLVSSQYVNLTIVNGKGEVVFLDSENSPEVFRAATLSLGKIGIIVKATIRVIPEFNIKSTQEVIHFETLLNNWETIWTSSEFIRCWWYPYTRKVVLWRGSKTEEPLTAPRKSWWGSTFGRFIYESLIWISVKIYPALTPYVESFVFHQQYGRVETYGSGDVSVQTSIAGLNMDCLFSQFVDEWGCPLNNGPEVLRSLDYSITQAAQNKEFFVHVPVEVRCSNTTLPAEIPDYSNRTKTSAGPVFGNTLRPYLDATPRHLRYAPLSDVTNSQLSLYINATIYRPFGSNSPIHKWFTLFEDTMGAAGGKPHWAKNFLGATSMAAGKVKDEKDYDDYEMRGMATKIKEWYGEDLLKFREIRSQQDPNNVFMANKEWAIRNGIIEP.

The region spanning 23–197 (YSCRPQLYFQ…VKATIRVIPE (175 aa)) is the FAD-binding PCMH-type domain. The residue at position 60 (His60) is a Pros-8alpha-FAD histidine.

It belongs to the oxygen-dependent FAD-linked oxidoreductase family. Requires FAD as cofactor.

The protein localises to the mitochondrion membrane. It carries out the reaction D-arabinono-1,4-lactone + O2 = dehydro-D-arabinono-1,4-lactone + H2O2 + H(+). Its pathway is cofactor biosynthesis; D-erythroascorbate biosynthesis; dehydro-D-arabinono-1,4-lactone from D-arabinose: step 2/2. The polypeptide is D-arabinono-1,4-lactone oxidase (ALO1) (Kluyveromyces lactis (strain ATCC 8585 / CBS 2359 / DSM 70799 / NBRC 1267 / NRRL Y-1140 / WM37) (Yeast)).